Here is a 229-residue protein sequence, read N- to C-terminus: Cytidylate kinase (229 aa).

10-18 lines the ATP pocket; it reads GFSSCGKST.

Belongs to the cytidylate kinase family. Type 1 subfamily.

The protein resides in the cytoplasm. The enzyme catalyses CMP + ATP = CDP + ADP. It carries out the reaction dCMP + ATP = dCDP + ADP. This Bacteroides fragilis (strain ATCC 25285 / DSM 2151 / CCUG 4856 / JCM 11019 / LMG 10263 / NCTC 9343 / Onslow / VPI 2553 / EN-2) protein is Cytidylate kinase.